The primary structure comprises 584 residues: High-affinity choline transporter 1 (584 aa).

Residues 1 to 6 lie on the Extracellular side of the membrane; sequence MTVHID. A helical membrane pass occupies residues 7–27; it reads GIVAIVLFYLLILFVGLWAAW. At 28 to 50 the chain is on the cytoplasmic side; sequence KSKNTSMEGAMDRSEAIMIGGRD. A helical membrane pass occupies residues 51–71; it reads IGLLVGGFTMTATWVGGGYIN. Residues 72 to 83 lie on the Extracellular side of the membrane; sequence GTAEAVYVPGYG. The helical transmembrane segment at 84-104 threads the bilayer; sequence LAWAQAPFGYALSLVIGGLFF. The Cytoplasmic portion of the chain corresponds to 105-127; it reads AKPMRSRGYVTMLDPFQQMYGKR. Residues 128 to 148 form a helical membrane-spanning segment; that stretch reads MGGLLFIPALLGEIFWSAAIL. Residues 149-166 are Extracellular-facing; it reads SALGATLSVIVDININVS. The helical transmembrane segment at 167-187 threads the bilayer; sequence VVVSAVIAVLYTLVGGLYSVA. Residues 188 to 193 lie on the Cytoplasmic side of the membrane; it reads YTDVVQ. The helical transmembrane segment at 194-214 threads the bilayer; sequence LFCIFLGLWISIPFALLNPAV. The Extracellular portion of the chain corresponds to 215 to 239; the sequence is TDIIVTANQEVYQEPWVGNIQSKDS. The helical transmembrane segment at 240-260 threads the bilayer; that stretch reads LIWIDNFLLLMLGGIPWQVYF. At 261-276 the chain is on the cytoplasmic side; that stretch reads QRVLSASSATYAQVLS. Residues 277 to 297 traverse the membrane as a helical segment; the sequence is FLAAFGCVLMAIPSVLIGAIG. Residues 298–319 lie on the Extracellular side of the membrane; sequence TSTDWNQTSYGLPGPIGKNETD. Residue Asn303 is glycosylated (N-linked (GlcNAc...) asparagine). Residues 320–340 form a helical membrane-spanning segment; it reads MILPIVLQHLCPPYISFFGLG. The Cytoplasmic portion of the chain corresponds to 341–378; sequence AVSAAVMSSADSSILSASSMFARNIYHLAFRQEASDKE. The chain crosses the membrane as a helical span at residues 379 to 399; it reads IVWVMRITIFLFGGAATSMAL. Residues 400–408 lie on the Extracellular side of the membrane; sequence LAQSIYGLW. Residues 409-429 form a helical membrane-spanning segment; sequence YLSSDLVYVIIFPQLISVLFV. The Cytoplasmic segment spans residues 430–437; the sequence is KGTNTYGS. The helical transmembrane segment at 438–458 threads the bilayer; it reads IAGYIIGFLLRISGGEPYLHM. Over 459–487 the chain is Extracellular; that stretch reads QPFIYYPGCYLDHSFGDDPVYVQRFPFKT. A helical transmembrane segment spans residues 488–508; that stretch reads MAMLFSFLGNTGVSYLVKYLF. At 509–584 the chain is on the cytoplasmic side; the sequence is VSGILPPKLD…NPELSKSGND (76 aa).

It belongs to the sodium:solute symporter (SSF) (TC 2.A.21) family. In terms of processing, phosphorylated. As to expression, specific for cholinergic neurons.

It localises to the membrane. Its function is as follows. Imports choline from the extracellular space to the neuron with high affinity. Rate-limiting step in acetylcholine synthesis. Sodium ion and chloride ion dependent. This chain is High-affinity choline transporter 1 (CHT1), found in Torpedo marmorata (Marbled electric ray).